Here is a 1006-residue protein sequence, read N- to C-terminus: DNA polymerase (1006 aa).

This sequence belongs to the DNA polymerase type-B family. Interacts with OPG148. Component of the Uracil-DNA glycosylase(UDG)-OPG148-polymerase complex; OPG148 and OPG116/UDG form a heterodimeric processivity factor that associates with OPG071 to form the processive polymerase holoenzyme.

It catalyses the reaction DNA(n) + a 2'-deoxyribonucleoside 5'-triphosphate = DNA(n+1) + diphosphate. Its function is as follows. Catalyzes DNA synthesis. Acquires processivity by associating with a heterodimeric processivity factor comprised of the viral OPG148 and OPG116 proteins, thereby forming the DNA polymerase holoenzyme. Displays 3'- to 5' exonuclease activity. Might participate in viral DNA recombination. Does not perform OPG116/D4synthesis across an abasic site. This is DNA polymerase (OPG071) from Monkeypox virus.